Consider the following 274-residue polypeptide: Diaminopimelate epimerase (274 aa).

Substrate contacts are provided by asparagine 11, glutamine 44, and asparagine 64. The Proton donor role is filled by cysteine 73. Residues 74 to 75 (GN), asparagine 157, asparagine 190, and 208 to 209 (ER) each bind substrate. Cysteine 217 functions as the Proton acceptor in the catalytic mechanism. 218 to 219 (GS) contributes to the substrate binding site.

It belongs to the diaminopimelate epimerase family. Homodimer.

Its subcellular location is the cytoplasm. It carries out the reaction (2S,6S)-2,6-diaminopimelate = meso-2,6-diaminopimelate. It functions in the pathway amino-acid biosynthesis; L-lysine biosynthesis via DAP pathway; DL-2,6-diaminopimelate from LL-2,6-diaminopimelate: step 1/1. Catalyzes the stereoinversion of LL-2,6-diaminopimelate (L,L-DAP) to meso-diaminopimelate (meso-DAP), a precursor of L-lysine and an essential component of the bacterial peptidoglycan. The sequence is that of Diaminopimelate epimerase from Escherichia coli O81 (strain ED1a).